The primary structure comprises 487 residues: Acetyl-coenzyme A carboxylase carboxyl transferase subunit beta, chloroplastic (487 aa).

The CoA carboxyltransferase N-terminal domain occupies 223 to 487; it reads LWIQCDNCYG…FCPLNKTEIK (265 aa). 4 residues coordinate Zn(2+): Cys227, Cys230, Cys243, and Cys246. The C4-type zinc-finger motif lies at 227 to 246; the sequence is CDNCYGLMYKKVKMNVCEQC.

This sequence belongs to the AccD/PCCB family. Acetyl-CoA carboxylase is a heterohexamer composed of biotin carboxyl carrier protein, biotin carboxylase and 2 subunits each of ACCase subunit alpha and ACCase plastid-coded subunit beta (accD). Requires Zn(2+) as cofactor.

The protein localises to the plastid. It localises to the chloroplast stroma. It catalyses the reaction N(6)-carboxybiotinyl-L-lysyl-[protein] + acetyl-CoA = N(6)-biotinyl-L-lysyl-[protein] + malonyl-CoA. It participates in lipid metabolism; malonyl-CoA biosynthesis; malonyl-CoA from acetyl-CoA: step 1/1. Its function is as follows. Component of the acetyl coenzyme A carboxylase (ACC) complex. Biotin carboxylase (BC) catalyzes the carboxylation of biotin on its carrier protein (BCCP) and then the CO(2) group is transferred by the transcarboxylase to acetyl-CoA to form malonyl-CoA. In Nasturtium officinale (Watercress), this protein is Acetyl-coenzyme A carboxylase carboxyl transferase subunit beta, chloroplastic.